A 251-amino-acid polypeptide reads, in one-letter code: Aspartate/glutamate leucyltransferase (251 aa).

It belongs to the R-transferase family. Bpt subfamily.

The protein resides in the cytoplasm. The catalysed reaction is N-terminal L-glutamyl-[protein] + L-leucyl-tRNA(Leu) = N-terminal L-leucyl-L-glutamyl-[protein] + tRNA(Leu) + H(+). The enzyme catalyses N-terminal L-aspartyl-[protein] + L-leucyl-tRNA(Leu) = N-terminal L-leucyl-L-aspartyl-[protein] + tRNA(Leu) + H(+). Functions in the N-end rule pathway of protein degradation where it conjugates Leu from its aminoacyl-tRNA to the N-termini of proteins containing an N-terminal aspartate or glutamate. This Stenotrophomonas maltophilia (strain R551-3) protein is Aspartate/glutamate leucyltransferase.